The primary structure comprises 424 residues: Glucan endo-1,3-alpha-glucosidase agn1 (424 aa).

Positions M1–A20 are cleaved as a signal peptide.

Belongs to the glycosyl hydrolase 71 family. Monomer. Not glycosylated.

The protein localises to the secreted. Its subcellular location is the cell wall. It carries out the reaction Endohydrolysis of (1-&gt;3)-alpha-D-glucosidic linkages in isolichenin, pseudonigeran and nigeran.. Functionally, has a role in cell separation where it is required for the degradation of the cell wall material surrounding the septum (the septum edging) which must be hydrolyzed before full separation of the daughter cells can occur. Hydrolyzes 1,3-alpha-glucan predominantly into pentasaccharides. This chain is Glucan endo-1,3-alpha-glucosidase agn1 (agn1), found in Schizosaccharomyces pombe (strain 972 / ATCC 24843) (Fission yeast).